Reading from the N-terminus, the 557-residue chain is Copine-6 (557 aa).

C2 domains lie at 2–127 and 134–263; these read SDPE…TKPL and TAGK…MQWD. Asp-167, Asp-173, Asp-229, Asp-231, and Asp-237 together coordinate Ca(2+). Residues 244-303 are linker region; it reads STFQEMQEGTANPGQEMQWDCINPKYRDKKKNYKSSGTVVLAQCTVEKVHTFLDYIMGGC. One can recognise a VWFA domain in the interval 306–526; it reads SFTVAIDFTA…ALAKRVLAEV (221 aa).

Belongs to the copine family. In terms of assembly, interacts (via second C2 domain) with OS9 (via C-terminus); this interaction occurs in a calcium-dependent manner in vitro. May interact with NECAB1. Requires Ca(2+) as cofactor.

Its subcellular location is the cytoplasm. It is found in the cell membrane. The protein localises to the endosome. The protein resides in the cytoplasmic vesicle. It localises to the clathrin-coated vesicle. Its subcellular location is the perikaryon. It is found in the cell projection. The protein localises to the dendrite. Its function is as follows. Calcium-dependent phospholipid-binding protein that plays a role in calcium-mediated intracellular processes. Binds phospholipid membranes in a calcium-dependent manner. Plays a role in dendrite formation by melanocytes. In Pongo abelii (Sumatran orangutan), this protein is Copine-6.